Reading from the N-terminus, the 244-residue chain is ATP synthase subunit a (244 aa).

Helical transmembrane passes span 25 to 45 (ISFT…LLIF), 85 to 105 (YFAF…FGMI), 115 to 135 (IIVT…IGFM), 144 to 164 (LFVP…IEII), 193 to 213 (GFVI…SVAL), and 216 to 236 (LEIL…CIYL).

This sequence belongs to the ATPase A chain family. In terms of assembly, F-type ATPases have 2 components, CF(1) - the catalytic core - and CF(0) - the membrane proton channel. CF(1) has five subunits: alpha(3), beta(3), gamma(1), delta(1), epsilon(1). CF(0) has three main subunits: a(1), b(2) and c(9-12). The alpha and beta chains form an alternating ring which encloses part of the gamma chain. CF(1) is attached to CF(0) by a central stalk formed by the gamma and epsilon chains, while a peripheral stalk is formed by the delta and b chains.

It localises to the cell inner membrane. Key component of the proton channel; it plays a direct role in the translocation of protons across the membrane. This chain is ATP synthase subunit a, found in Pelagibacter ubique (strain HTCC1062).